A 102-amino-acid chain; its full sequence is Integration host factor subunit beta (102 aa).

The segment at 54–102 is disordered; the sequence is HHRPARMGRNPKTGEPVALPAKYVPHFKPGKELRERVNSSRHQAPLRSQ. Basic and acidic residues predominate over residues 82-91; it reads PGKELRERVN. Residues 93 to 102 show a composition bias toward polar residues; the sequence is SRHQAPLRSQ.

The protein belongs to the bacterial histone-like protein family. As to quaternary structure, heterodimer of an alpha and a beta chain.

Its function is as follows. This protein is one of the two subunits of integration host factor, a specific DNA-binding protein that functions in genetic recombination as well as in transcriptional and translational control. This chain is Integration host factor subunit beta, found in Halorhodospira halophila (strain DSM 244 / SL1) (Ectothiorhodospira halophila (strain DSM 244 / SL1)).